The chain runs to 487 residues: Lysophospholipid acyltransferase 5 (487 aa).

The residue at position 2 (A2) is an N-acetylalanine. Transmembrane regions (helical) follow at residues 44-64, 67-87, 111-131, 178-198, 236-256, and 285-305; these read LIFSIFLGYPLALFYRHYLFY, SYLIHLFHAFSGLSIAYFNFG, ITAVFTTLCFQMAYLLAGYYY, ILGVPSLLEVAGFSYFYGAFL, LGLVYLVGYTLLSPHITEDYL, and VTCWLVTEGVCILSGLGFNGF. N-linked (GlcNAc...) asparagine glycosylation occurs at N308. Residues N338 and H374 contribute to the active site. Transmembrane regions (helical) follow at residues 364 to 384, 422 to 442, and 453 to 473; these read GLSLLFLALWHGLHSGYLICF, LVQQTIHWLFMGYSMTAFCLF, and SIYFLGHVFFLSLLFTLPYVY. Positions 484–487 match the Di-lysine motif motif; the sequence is KKRE.

Belongs to the membrane-bound acyltransferase family.

It is found in the endoplasmic reticulum membrane. The enzyme catalyses a 1-acyl-sn-glycero-3-phosphocholine + an acyl-CoA = a 1,2-diacyl-sn-glycero-3-phosphocholine + CoA. The catalysed reaction is a 1-acyl-sn-glycero-3-phosphoethanolamine + an acyl-CoA = a 1,2-diacyl-sn-glycero-3-phosphoethanolamine + CoA. It catalyses the reaction a 1-acyl-sn-glycero-3-phospho-L-serine + an acyl-CoA = a 1,2-diacyl-sn-glycero-3-phospho-L-serine + CoA. It carries out the reaction (9Z,12Z)-octadecadienoyl-CoA + a 1-acyl-sn-glycero-3-phosphocholine = 1-acyl-2-(9Z,12Z)-octadecadienoyl-sn-glycero-3-phosphocholine + CoA. The enzyme catalyses (5Z,8Z,11Z,14Z)-eicosatetraenoyl-CoA + a 1-acyl-sn-glycero-3-phosphocholine = 1-acyl-2-(5Z,8Z,11Z,14Z-eicosatetraenoyl)-sn-glycero-3-phosphocholine + CoA. The catalysed reaction is dodecanoyl-CoA + 1-hexadecanoyl-sn-glycero-3-phosphocholine = 1-hexadecanoyl-2-dodecanoyl-sn-glycero-3-phosphocholine + CoA. It catalyses the reaction octadecanoyl-CoA + 1-hexadecanoyl-sn-glycero-3-phosphocholine = 1-hexadecanoyl-2-octadecanoyl-sn-glycero-3-phosphocholine + CoA. It carries out the reaction 1-dodecanoyl-sn-glycero-3-phosphocholine + hexadecanoyl-CoA = 1-dodecanoyl-2-hexadecanoyl-sn-glycero-3-phosphocholine + CoA. The enzyme catalyses 1-tetradecanoyl-sn-glycero-3-phosphocholine + hexadecanoyl-CoA = 1-tetradecanoyl-2-hexadecanoyl-sn-glycero-3-phosphocholine + CoA. The catalysed reaction is 1-hexadecanoyl-sn-glycero-3-phosphocholine + hexadecanoyl-CoA = 1,2-dihexadecanoyl-sn-glycero-3-phosphocholine + CoA. It catalyses the reaction 1-octadecanoyl-sn-glycero-3-phosphocholine + hexadecanoyl-CoA = 1-octadecanoyl-2-hexadecanoyl-sn-glycero-3-phosphocholine + CoA. It carries out the reaction 1-(9Z-octadecenoyl)-sn-glycero-3-phosphocholine + hexadecanoyl-CoA = 1-(9Z-octadecenoyl)-2-hexadecanoyl-sn-glycero-3-phosphocholine + CoA. The enzyme catalyses (9Z)-hexadecenoyl-CoA + 1-hexadecanoyl-sn-glycero-3-phosphocholine = 1-hexadecanoyl-2-(9Z-hexadecenoyl)-sn-glycero-3-phosphocholine + CoA. The catalysed reaction is 1-hexadecanoyl-sn-glycero-3-phosphocholine + (9Z)-octadecenoyl-CoA = 1-hexadecanoyl-2-(9Z-octadecenoyl)-sn-glycero-3-phosphocholine + CoA. It catalyses the reaction (9Z,12Z)-octadecadienoyl-CoA + 1-hexadecanoyl-sn-glycero-3-phosphocholine = 1-hexadecanoyl-2-(9Z,12Z-octadecadienoyl)-sn-glycero-3-phosphocholine + CoA. It carries out the reaction 1-dodecanoyl-sn-glycero-3-phosphocholine + (5Z,8Z,11Z,14Z)-eicosatetraenoyl-CoA = 1-dodecanoyl-2-(5Z,8Z,11Z,14Z)-eicosatetraenoyl-sn-glycero-3-phosphocholine + CoA. The enzyme catalyses (5Z,8Z,11Z,14Z)-eicosatetraenoyl-CoA + 1-hexadecanoyl-sn-glycero-3-phosphocholine = 1-hexadecanoyl-2-(5Z,8Z,11Z,14Z-eicosatetraenoyl)-sn-glycero-3-phosphocholine + CoA. The catalysed reaction is 1-octadecanoyl-sn-glycero-3-phosphocholine + (5Z,8Z,11Z,14Z)-eicosatetraenoyl-CoA = 1-octadecanoyl-2-(5Z,8Z,11Z,14Z-eicosatetraenoyl)-sn-glycero-3-phosphocholine + CoA. It catalyses the reaction 1-eicosanoyl-sn-glycero-3-phosphocholine + (5Z,8Z,11Z,14Z)-eicosatetraenoyl-CoA = 1-eicosanoyl-2-(5Z,8Z,11Z,14Z)-eicosatetraenoyl-sn-glycero-3-phosphocholine + CoA. It carries out the reaction 1-(9Z-octadecenoyl)-sn-glycero-3-phosphocholine + (9Z)-octadecenoyl-CoA = 1,2-di-(9Z-octadecenoyl)-sn-glycero-3-phosphocholine + CoA. The enzyme catalyses 1-(9Z-octadecenoyl)-sn-glycero-3-phosphocholine + (9Z,12Z)-octadecadienoyl-CoA = 1-(9Z)-octadecenoyl-2-(9Z,12Z)-octadecadienoyl-sn-glycero-3-phosphocholine + CoA. The catalysed reaction is 1-(9Z-octadecenoyl)-sn-glycero-3-phosphocholine + (5Z,8Z,11Z,14Z)-eicosatetraenoyl-CoA = 1-(9Z)-octadecenoyl-2-(5Z,8Z,11Z,14Z)-icosatetraenoyl-sn-glycero-3-phosphocholine + CoA. It catalyses the reaction a 1-acyl-sn-glycero-3-phosphoethanolamine + (9Z,12Z)-octadecadienoyl-CoA = 1-acyl-2-(9Z,12Z)-octadecadienoyl-sn-glycero-3-phosphoethanolamine + CoA. It carries out the reaction 1-(9Z-octadecenoyl)-sn-glycero-3-phosphoethanolamine + (9Z,12Z)-octadecadienoyl-CoA = 1-(9Z)-octadecenoyl-2-(9Z,12Z)-octadecadienoyl-sn-glycero-3-phosphoethanolamine + CoA. The enzyme catalyses 1-(10Z-heptadecenoyl)-sn-glycero-3-phosphoethanolamine + (9Z,12Z)-octadecadienoyl-CoA = 1-(10Z-heptadecenoyl)-2-(9Z,12Z-octadecadienoyl)-sn-glycero-3-phosphoethanolamine + CoA. The catalysed reaction is a 1-acyl-sn-glycero-3-phosphoethanolamine + (5Z,8Z,11Z,14Z)-eicosatetraenoyl-CoA = 1-acyl-2-(5Z,8Z,11Z,14Z)-eicosatetraenoyl-sn-glycero-3-phosphoethanolamine + CoA. It catalyses the reaction 1-hexadecanoyl-sn-glycero-3-phosphoethanolamine + (5Z,8Z,11Z,14Z)-eicosatetraenoyl-CoA = 1-hexadecanoyl-2-(5Z,8Z,11Z,14Z-eicosatetraenoyl)-sn-glycero-3-phosphoethanolamine + CoA. It carries out the reaction 1-(9Z-octadecenoyl)-sn-glycero-3-phosphoethanolamine + (5Z,8Z,11Z,14Z)-eicosatetraenoyl-CoA = 1-(9Z)-octadecenoyl-2-(5Z,8Z,11Z,14Z)-eicosatetraenoyl-sn-glycero-3-phosphoethanolamine + CoA. The enzyme catalyses 1-(10Z-heptadecenoyl)-sn-glycero-3-phosphoethanolamine + (5Z,8Z,11Z,14Z)-eicosatetraenoyl-CoA = 1-(10Z-heptadecenoyl)-2-(5Z,8Z,11Z,14Z-eicosatetraenoyl)-sn-glycero-3-phosphoethanolamine + CoA. The catalysed reaction is a 1-O-(1Z-alkenyl)-sn-glycero-3-phosphoethanolamine + (5Z,8Z,11Z,14Z)-eicosatetraenoyl-CoA = 1-O-(1Z)-alkenyl-2-(5Z,8Z,11Z,14Z)-eicosatetraenoyl-sn-glycero-3-phosphoethanolamine + CoA. It catalyses the reaction a 1-acyl-sn-glycero-3-phospho-L-serine + (9Z,12Z)-octadecadienoyl-CoA = 1-acyl-2-(9Z,12Z-octadecadienoyl)-sn-glycero-3-phospho-L-serine + CoA. It carries out the reaction a 1-acyl-sn-glycero-3-phospho-L-serine + (5Z,8Z,11Z,14Z)-eicosatetraenoyl-CoA = 1-acyl-2-(5Z,8Z,11Z,14Z-eicosatetraenoyl)-sn-glycero-3-phospho-L-serine + CoA. The enzyme catalyses 1-hexadecanoyl-sn-glycero-3-phospho-L-serine + (9Z)-octadecenoyl-CoA = 1-hexadecanoyl-2-(9Z-octadecenoyl)-sn-glycero-3-phospho-L-serine + CoA. The catalysed reaction is 1-(9Z-octadecenoyl)-sn-glycero-3-phospho-L-serine + (9Z)-octadecenoyl-CoA = 1,2-di-(9Z)-octadecenoyl-sn-glycero-3-phospho-L-serine + CoA. It catalyses the reaction 1-hexadecanoyl-sn-glycero-3-phospho-L-serine + (9Z,12Z)-octadecadienoyl-CoA = 1-hexadecanoyl-2-(9Z,12Z-octadecadienoyl)-sn-glycero-3-phospho-L-serine + CoA. It carries out the reaction 1-(9Z-octadecenoyl)-sn-glycero-3-phospho-L-serine + (9Z,12Z)-octadecadienoyl-CoA = 1-(9Z-octadecenoyl)-2-(9Z,12Z-octadienoyl)-sn-glycero-3-phospho-L-serine + CoA. The enzyme catalyses 1-hexadecanoyl-sn-glycero-3-phospho-L-serine + (5Z,8Z,11Z,14Z)-eicosatetraenoyl-CoA = 1-hexadecanoyl-2-(5Z,8Z,11Z,14Z-eicosatetraenoyl)-sn-glycero-3-phospho-L-serine + CoA. The catalysed reaction is 1-(9Z-octadecenoyl)-sn-glycero-3-phospho-L-serine + (5Z,8Z,11Z,14Z)-eicosatetraenoyl-CoA = 1-(9Z-octadecenoyl)-2-(5Z,8Z,11Z,14Z-eicosatetraenoyl)-sn-glycero-3-phospho-L-serine + CoA. The protein operates within lipid metabolism; phospholipid metabolism. Lysophospholipid O-acyltransferase (LPLAT) that catalyzes the reacylation step of the phospholipid remodeling process also known as the Lands cycle. Catalyzes transfer of the fatty acyl chain from fatty acyl-CoA to 1-acyl lysophospholipid to form various classes of phospholipids. Converts 1-acyl lysophosphatidylcholine (LPC) into phosphatidylcholine (PC) (LPCAT activity), 1-acyl lysophosphatidylserine (LPS) into phosphatidylserine (PS) (LPSAT activity) and 1-acyl lysophosphatidylethanolamine (LPE) into phosphatidylethanolamine (PE) (LPEAT activity). Favors polyunsaturated fatty acyl-CoAs as acyl donors compared to saturated fatty acyl-CoAs. Has higher activity for LPC acyl acceptors compared to LPEs and LPSs. Can also transfer the fatty acyl chain from fatty acyl-CoA to 1-O-alkyl lysophospholipid or 1-O-alkenyl lysophospholipid with lower efficiency. Acts as a major LPC O-acyltransferase in liver and intestine. As a component of the liver X receptor/NR1H3 or NR1H2 signaling pathway, mainly catalyzes the incorporation of arachidonate into PCs of endoplasmic reticulum (ER) membranes, increasing membrane dynamics and enabling triacylglycerols transfer to nascent very low-density lipoprotein (VLDL) particles. Promotes processing of sterol regulatory protein SREBF1 in hepatocytes, likely by facilitating the translocation of SREBF1-SCAP complex from ER to the Golgi apparatus. Participates in mechanisms by which the liver X receptor/NR1H3 or NR1H2 signaling pathway counteracts lipid-induced ER stress response and inflammation. Down-regulates hepatic inflammation by limiting arachidonic acid availability for synthesis of inflammatory eicosanoids, such as prostaglandins. In enterocytes, acts as a component of a gut-brain feedback loop that coordinates dietary lipid absorption and food intake. Regulates the abundance of PCs containing linoleate and arachidonate in enterocyte membranes, enabling passive diffusion of fatty acids and cholesterol across the membrane for efficient chylomicron assembly. In the intestinal crypt, acts as a component of dietary-responsive phospholipid-cholesterol axis, regulating the biosynthesis of cholesterol and its mitogenic effects on intestinal stem cells. The sequence is that of Lysophospholipid acyltransferase 5 (Lpcat3) from Rattus norvegicus (Rat).